The sequence spans 273 residues: Cell division protein ZipA (273 aa).

Position 1 (Met1) is a topological domain, periplasmic. Residues 2-22 (DIGLREWLIVIGIIVIAGILF) form a helical membrane-spanning segment. The Cytoplasmic segment spans residues 23-273 (DGWRRMRGGK…ERRQMTIKQR (251 aa)). Positions 61 to 127 (VVNREHEPSL…DLQERPQKEQ (67 aa)) are disordered.

The protein belongs to the ZipA family. As to quaternary structure, interacts with FtsZ via their C-terminal domains.

The protein resides in the cell inner membrane. In terms of biological role, essential cell division protein that stabilizes the FtsZ protofilaments by cross-linking them and that serves as a cytoplasmic membrane anchor for the Z ring. Also required for the recruitment to the septal ring of downstream cell division proteins. The polypeptide is Cell division protein ZipA (Stutzerimonas stutzeri (strain A1501) (Pseudomonas stutzeri)).